Here is a 159-residue protein sequence, read N- to C-terminus: Cytochrome b6-f complex subunit 4 (159 aa).

3 helical membrane passes run 35–55 (ILIF…LAVL), 93–113 (LLGV…PFIE), and 127–147 (ATAV…GAMI).

This sequence belongs to the cytochrome b family. PetD subfamily. The 4 large subunits of the cytochrome b6-f complex are cytochrome b6, subunit IV (17 kDa polypeptide, PetD), cytochrome f and the Rieske protein, while the 4 small subunits are PetG, PetL, PetM and PetN. The complex functions as a dimer.

The protein localises to the cell inner membrane. Component of the cytochrome b6-f complex, which mediates electron transfer between photosystem II (PSII) and photosystem I (PSI), cyclic electron flow around PSI, and state transitions. The protein is Cytochrome b6-f complex subunit 4 of Gloeobacter violaceus (strain ATCC 29082 / PCC 7421).